Consider the following 188-residue polypeptide: Peptidyl-tRNA hydrolase (188 aa).

Tyrosine 14 contacts tRNA. Histidine 19 (proton acceptor) is an active-site residue. Residues tyrosine 64, asparagine 66, and asparagine 112 each contribute to the tRNA site.

This sequence belongs to the PTH family. As to quaternary structure, monomer.

Its subcellular location is the cytoplasm. It catalyses the reaction an N-acyl-L-alpha-aminoacyl-tRNA + H2O = an N-acyl-L-amino acid + a tRNA + H(+). Hydrolyzes ribosome-free peptidyl-tRNAs (with 1 or more amino acids incorporated), which drop off the ribosome during protein synthesis, or as a result of ribosome stalling. Its function is as follows. Catalyzes the release of premature peptidyl moieties from peptidyl-tRNA molecules trapped in stalled 50S ribosomal subunits, and thus maintains levels of free tRNAs and 50S ribosomes. The sequence is that of Peptidyl-tRNA hydrolase from Leuconostoc mesenteroides subsp. mesenteroides (strain ATCC 8293 / DSM 20343 / BCRC 11652 / CCM 1803 / JCM 6124 / NCDO 523 / NBRC 100496 / NCIMB 8023 / NCTC 12954 / NRRL B-1118 / 37Y).